Here is a 292-residue protein sequence, read N- to C-terminus: Protease HtpX (292 aa).

Transmembrane regions (helical) follow at residues Ile5–Val25 and Ser34–Leu54. His140 provides a ligand contact to Zn(2+). Residue Glu141 is part of the active site. Residue His144 coordinates Zn(2+). 2 helical membrane passes run Leu155–Ile175 and Ile193–Phe213. Glu218 contacts Zn(2+).

This sequence belongs to the peptidase M48B family. The cofactor is Zn(2+).

It is found in the cell inner membrane. This Xanthomonas oryzae pv. oryzae (strain MAFF 311018) protein is Protease HtpX.